The sequence spans 70 residues: MPRLPPILRLLQAPAKFTVVPKAHVSAKPAKTPTSAVEQAVGISAIVVGFMVPAGWVLAHLESYKKSSAA.

A mitochondrion-targeting transit peptide spans 1-24 (MPRLPPILRLLQAPAKFTVVPKAH). Residues 25-38 (VSAKPAKTPTSAVE) lie on the Mitochondrial matrix side of the membrane. A helical transmembrane segment spans residues 39 to 60 (QAVGISAIVVGFMVPAGWVLAH). Residues 61-70 (LESYKKSSAA) are Mitochondrial intermembrane-facing.

It belongs to the cytochrome c oxidase VIII family. Component of the cytochrome c oxidase (complex IV, CIV), a multisubunit enzyme composed of 14 subunits. The complex is composed of a catalytic core of 3 subunits MT-CO1, MT-CO2 and MT-CO3, encoded in the mitochondrial DNA, and 11 supernumerary subunits COX4I, COX5A, COX5B, COX6A, COX6B, COX6C, COX7A, COX7B, COX7C, COX8 and NDUFA4, which are encoded in the nuclear genome. The complex exists as a monomer or a dimer and forms supercomplexes (SCs) in the inner mitochondrial membrane with NADH-ubiquinone oxidoreductase (complex I, CI) and ubiquinol-cytochrome c oxidoreductase (cytochrome b-c1 complex, complex III, CIII), resulting in different assemblies (supercomplex SCI(1)III(2)IV(1) and megacomplex MCI(2)III(2)IV(2)).

The protein localises to the mitochondrion inner membrane. The protein operates within energy metabolism; oxidative phosphorylation. Component of the cytochrome c oxidase, the last enzyme in the mitochondrial electron transport chain which drives oxidative phosphorylation. The respiratory chain contains 3 multisubunit complexes succinate dehydrogenase (complex II, CII), ubiquinol-cytochrome c oxidoreductase (cytochrome b-c1 complex, complex III, CIII) and cytochrome c oxidase (complex IV, CIV), that cooperate to transfer electrons derived from NADH and succinate to molecular oxygen, creating an electrochemical gradient over the inner membrane that drives transmembrane transport and the ATP synthase. Cytochrome c oxidase is the component of the respiratory chain that catalyzes the reduction of oxygen to water. Electrons originating from reduced cytochrome c in the intermembrane space (IMS) are transferred via the dinuclear copper A center (CU(A)) of subunit 2 and heme A of subunit 1 to the active site in subunit 1, a binuclear center (BNC) formed by heme A3 and copper B (CU(B)). The BNC reduces molecular oxygen to 2 water molecules using 4 electrons from cytochrome c in the IMS and 4 protons from the mitochondrial matrix. This chain is Cytochrome c oxidase subunit 8B, mitochondrial (Cox8b), found in Mus musculus (Mouse).